A 360-amino-acid polypeptide reads, in one-letter code: Methyltransferase pvhD (360 aa).

S-adenosyl-L-methionine-binding positions include 201-202 (SG), D227, 251-252 (DL), R267, and R268.

Belongs to the class I-like SAM-binding methyltransferase superfamily. Cation-independent O-methyltransferase family.

Its pathway is secondary metabolite biosynthesis. Its function is as follows. Methyltransferase; part of the gene cluster that mediates the biosynthesis of varicidin A, an antifungal natural product containing a cis-octahydrodecalin core. The PKS module of pvhA together with the enoylreductase pvhC catalyze the formation of the polyketide unit which is then conjugated to L-isoleucine by the condensation domain of the NRPS module. Activity of the Dieckmann cyclase domain (RED) of pvhA results in release of an acyclic tetramate. The cytochrome P450 monooxygenase pvhE then catalyzes the oxidation of the C21 methyl group to a to carboxylate group. The methyltransferase pvhD then further methylates the pvhE product. The Diels-Alderase pvhB is able to catalyze Diels-Alder cycloaddition using both pvhE and pvhD products as substrates to form the decalin ring, yielding varicidin B and A, respectively. In Talaromyces variabilis (Penicillium variabile), this protein is Methyltransferase pvhD.